The following is a 425-amino-acid chain: Elongation factor 1-alpha (425 aa).

A tr-type G domain is found at 5 to 221 (KPHINLAVIG…DELEVPDKPT (217 aa)). Positions 14–21 (GHIDHGKS) are G1. 14 to 21 (GHIDHGKS) is a binding site for GTP. Position 21 (serine 21) interacts with Mg(2+). The tract at residues 70 to 74 (GITID) is G2. The interval 91 to 94 (DCPG) is G3. GTP contacts are provided by residues 91-95 (DCPGH) and 146-149 (NKMD). The segment at 146–149 (NKMD) is G4. The interval 185–187 (SAF) is G5.

This sequence belongs to the TRAFAC class translation factor GTPase superfamily. Classic translation factor GTPase family. EF-Tu/EF-1A subfamily.

It localises to the cytoplasm. The enzyme catalyses GTP + H2O = GDP + phosphate + H(+). GTP hydrolase that promotes the GTP-dependent binding of aminoacyl-tRNA to the A-site of ribosomes during protein biosynthesis. This Methanospirillum hungatei JF-1 (strain ATCC 27890 / DSM 864 / NBRC 100397 / JF-1) protein is Elongation factor 1-alpha.